The following is a 188-amino-acid chain: Phosphoribosylglycinamide formyltransferase (188 aa).

Position 12-14 (12-14) interacts with N(1)-(5-phospho-beta-D-ribosyl)glycinamide; that stretch reads GSN. (6R)-10-formyltetrahydrofolate contacts are provided by residues lysine 66, 91–94, and asparagine 108; that span reads MRLI. The active-site Proton donor is histidine 110.

It belongs to the GART family.

It carries out the reaction N(1)-(5-phospho-beta-D-ribosyl)glycinamide + (6R)-10-formyltetrahydrofolate = N(2)-formyl-N(1)-(5-phospho-beta-D-ribosyl)glycinamide + (6S)-5,6,7,8-tetrahydrofolate + H(+). The protein operates within purine metabolism; IMP biosynthesis via de novo pathway; N(2)-formyl-N(1)-(5-phospho-D-ribosyl)glycinamide from N(1)-(5-phospho-D-ribosyl)glycinamide (10-formyl THF route): step 1/1. Its function is as follows. Catalyzes the transfer of a formyl group from 10-formyltetrahydrofolate to 5-phospho-ribosyl-glycinamide (GAR), producing 5-phospho-ribosyl-N-formylglycinamide (FGAR) and tetrahydrofolate. The sequence is that of Phosphoribosylglycinamide formyltransferase from Staphylococcus aureus (strain Mu50 / ATCC 700699).